A 247-amino-acid chain; its full sequence is Thioredoxin reductase-like selenoprotein T homolog selt-1.1 (247 aa).

Positions Met1–Ala26 are cleaved as a signal peptide. A disulfide bridge links Cys92 with Cys95.

It belongs to the SelWTH family. SELT subfamily. As to expression, broadly expressed in neurons of nervous system including ADL, ASH, ASI, ASJ, ASK and AWB amphid sensilla neurons, in epithelial cells including hypodermal, arcade, pharyngeal, vulval and rectal cells, and in somatic muscle cells of the head, neck and body wall, and non-striated pharyngeal muscles.

The protein resides in the endoplasmic reticulum. The catalysed reaction is [thioredoxin]-dithiol + NADP(+) = [thioredoxin]-disulfide + NADPH + H(+). In terms of biological role, probably has thioredoxin reductase-like oxidoreductase activity. Plays a role in regulating the oxidative stress response, and odorant and pathogenic bacteria avoidance behavior. This Caenorhabditis elegans protein is Thioredoxin reductase-like selenoprotein T homolog selt-1.1.